Consider the following 472-residue polypeptide: MSQNVYQFIDLQRVDPPKKPLKIRKIEFVEIYEPFSEGQAKAQADRCLSCGNPYCEWKCPVHNYIPNWLKLANEGRIFEAAELSHQTNTLPEVCGRVCPQDRLCEGSCTLNDEFGAVTIGNIERYINDKAFEMGWRPDMSGVKQTGKKVAIIGAGPAGLACADVLTRNGVKAVVFDRHPEIGGLLTFGIPAFKLEKEVMTRRREIFTGMGIEFKLNTEVGRDVQLDDLLSDYDAVFLGVGTYQSMRGGLENEDADGVYAALPFLIANTKQLMGFGETRDEPFVSMEGKRVVVLGGGDTAMDCVRTSVRQGAKHVTCAYRRDEENMPGSRREVKNAREEGVEFKFNVQPLGIEVNGNGKVSGVKMVRTEMGEPDAKGRRRAEIVAGSEHIVPADAVIMAFGFRPHNMEWLAKHSVELDSQGRIIAPEGSDNAFQTSNPKIFAGGDIVRGSDLVVTAIAEGRKAADGIMNWLEV.

The region spanning 38–69 (GQAKAQADRCLSCGNPYCEWKCPVHNYIPNWL) is the 4Fe-4S ferredoxin-type domain. Residues Cys-47, Cys-50, Cys-55, and Cys-59 each coordinate [4Fe-4S] cluster.

As to quaternary structure, aggregate of 4 catalytic active heterodimers, consisting of a large and a small subunit. The cofactor is [4Fe-4S] cluster.

It carries out the reaction 2 L-glutamate + NADP(+) = L-glutamine + 2-oxoglutarate + NADPH + H(+). Its pathway is amino-acid biosynthesis; L-glutamate biosynthesis via GLT pathway; L-glutamate from 2-oxoglutarate and L-glutamine (NADP(+) route): step 1/1. It functions in the pathway energy metabolism; nitrogen metabolism. Catalyzes the conversion of L-glutamine and 2-oxoglutarate into two molecules of L-glutamate. This is Glutamate synthase [NADPH] small chain (gltD) from Escherichia coli (strain K12).